The sequence spans 394 residues: Guanine nucleotide-binding protein G(s) subunit alpha (394 aa).

The interval 1 to 23 (MGCLGNSKTEDQRNEEKAQREAN) is disordered. The N-palmitoyl glycine moiety is linked to residue glycine 2. The S-palmitoyl cysteine moiety is linked to residue cysteine 3. The segment covering 8–23 (KTEDQRNEEKAQREAN) has biased composition (basic and acidic residues). One can recognise a G-alpha domain in the interval 39 to 394 (ATHRLLLLGA…RMHLRQYELL (356 aa)). The interval 42-55 (RLLLLGAGESGKST) is G1 motif. Residue 47 to 55 (GAGESGKST) coordinates GTP. Serine 54 contributes to the Mg(2+) binding site. Residues 68–91 (FNGEGGEEDPQAARSNSDGEKATK) form a disordered region. Positions 196-204 (DLLRCRVLT) are G2 motif. GTP contacts are provided by residues 197–204 (LLRCRVLT), 223–227 (DVGGQ), 292–295 (NKQD), and alanine 366. Threonine 204 is a binding site for Mg(2+). The segment at 219–228 (FHMFDVGGQR) is G3 motif. A G4 motif region spans residues 288–295 (ILFLNKQD). Positions 364 to 369 (TCAVDT) are G5 motif.

It belongs to the G-alpha family. G(s) subfamily. In terms of assembly, heterotrimeric G proteins are composed of 3 units; alpha, beta and gamma. The alpha chain contains the guanine nucleotide binding site. Interacts with CRY1; the interaction may block GPCR-mediated regulation of cAMP concentrations. Interacts with ADCY6 and stimulates its adenylyl cyclase activity. Interacts with ADCY2 and ADCY5. Stimulates the ADCY5 adenylyl cyclase activity. Interaction with SASH1.

It localises to the cell membrane. Its function is as follows. Guanine nucleotide-binding proteins (G proteins) function as transducers in numerous signaling pathways controlled by G protein-coupled receptors (GPCRs). Signaling involves the activation of adenylyl cyclases, resulting in increased levels of the signaling molecule cAMP. GNAS functions downstream of several GPCRs, including beta-adrenergic receptors. Stimulates the Ras signaling pathway via RAPGEF2. The protein is Guanine nucleotide-binding protein G(s) subunit alpha (GNAS) of Canis lupus familiaris (Dog).